The following is a 167-amino-acid chain: Ribonuclease P protein subunit p20 (167 aa).

Positions 1-36 (MMGSNYPEHGTKPRSAKYHKQQNHRVVRKQPPRPAV) are disordered. Residues 12–31 (KPRSAKYHKQQNHRVVRKQP) show a composition bias toward basic residues.

Interacts with Smn.

It localises to the nucleus. The protein resides in the nucleolus. Its subcellular location is the cytoplasm. It is found in the cytoplasmic granule. Its function is as follows. Component of ribonuclease P, a protein complex that generates mature tRNA molecules by cleaving their 5'-ends. Also a component of RNase MRP complex, which cleaves pre-rRNA sequences. The protein is Ribonuclease P protein subunit p20 of Drosophila melanogaster (Fruit fly).